The primary structure comprises 469 residues: 3-isopropylmalate dehydratase large subunit (469 aa).

[4Fe-4S] cluster-binding residues include Cys-347, Cys-408, and Cys-411.

It belongs to the aconitase/IPM isomerase family. LeuC type 1 subfamily. In terms of assembly, heterodimer of LeuC and LeuD. The cofactor is [4Fe-4S] cluster.

The catalysed reaction is (2R,3S)-3-isopropylmalate = (2S)-2-isopropylmalate. It functions in the pathway amino-acid biosynthesis; L-leucine biosynthesis; L-leucine from 3-methyl-2-oxobutanoate: step 2/4. Catalyzes the isomerization between 2-isopropylmalate and 3-isopropylmalate, via the formation of 2-isopropylmaleate. This Haemophilus influenzae (strain PittEE) protein is 3-isopropylmalate dehydratase large subunit.